A 195-amino-acid polypeptide reads, in one-letter code: Ribonuclease HII (195 aa).

Positions 6–195 (SLIAGVDEVG…KSFISRLKKN (190 aa)) constitute an RNase H type-2 domain. Residues Asp12, Glu13, and Asp108 each coordinate a divalent metal cation.

Belongs to the RNase HII family. Mn(2+) serves as cofactor. It depends on Mg(2+) as a cofactor.

Its subcellular location is the cytoplasm. It catalyses the reaction Endonucleolytic cleavage to 5'-phosphomonoester.. Its function is as follows. Endonuclease that specifically degrades the RNA of RNA-DNA hybrids. The sequence is that of Ribonuclease HII from Prochlorococcus marinus (strain NATL2A).